The primary structure comprises 959 residues: Ataxin-2 homolog (959 aa).

The Sm domain maps to 13–92; that stretch reads DVLSAINDMI…IVDFAYVTQE (80 aa). Disordered stretches follow at residues 203–378, 392–484, 501–528, 697–831, and 867–959; these read AREI…GSRV, TAPK…SVIT, PRVA…HPAM, PPQG…QHIQ, and PMQQ…QSPP. The span at 226–235 shows a compositional bias: basic and acidic residues; it reads DLDKITRQED. The span at 246 to 260 shows a compositional bias: low complexity; sequence NNSFNQQQQQRRNPN. Basic and acidic residues predominate over residues 270-281; it reads RRAEGLRGDRRN. The segment covering 282 to 313 has biased composition (low complexity); sequence SGSSSANNSRYGAPAAAQQNYSQNQQQQQGQK. Composition is skewed to polar residues over residues 341–356 and 473–484; these read RQQQ…NNNV and VSVTSENDSVIT. Composition is skewed to low complexity over residues 504 to 528, 697 to 707, and 715 to 725; these read APAT…HPAM, PPQGQQQQPRY, and QQQQQQPQQQQ. Polar residues-rich tracts occupy residues 726-742 and 756-765; these read FSGE…SQPT and APQNGNMQAE. Over residues 766-788 the composition is skewed to low complexity; that stretch reads SSSNASHSGSTSSQSGQRSGSPP. Over residues 789–798 the composition is skewed to pro residues; that stretch reads GAVPPPPPPQ. 3 stretches are compositionally biased toward low complexity: residues 822–831, 867–876, and 902–911; these read MMQQQQQHIQ, PMQQNQHPQQ, and QQQQQQQQQQ. Polar residues predominate over residues 912 to 922; sequence MHRQNSLPQQF. A compositionally biased stretch (low complexity) spans 923 to 935; sequence QGNQGVNPSGQQS. Residues 948–959 show a composition bias toward polar residues; that stretch reads TPRDQQHSQSPP.

This sequence belongs to the ataxin-2 family. As to quaternary structure, interacts (via C-terminus) with szy-20 (via C-terminus); the interaction is RNA independent. Interacts with pab-1. Interacts with gdi-1. As to expression, expressed in the central nervous system, dorsal and ventral nerve cord, intestinal lining and body-wall muscle. Expressed in the gonad.

It localises to the cytoplasm. The protein resides in the nucleus. In terms of biological role, probable RNA-binding protein that negatively regulates the translation of targets. Functions with RNA-binding protein szy-20 to ensure embryonic cell division, and to this end, plays a role in the regulation of centrosome assembly, position and size, and in astral microtubule outgrowth and nucleation. Required for gonad development, germ cell proliferation and for the production of oocytes. Regulates whole body growth and fat accumulation in response to food availability, and this may be through the mTOR pathway, upstream of daf-15 and rheb-1. This Caenorhabditis elegans protein is Ataxin-2 homolog.